A 931-amino-acid polypeptide reads, in one-letter code: Netrin receptor UNC5C (931 aa).

Positions 1–39 are cleaved as a signal peptide; sequence MGKGLEGTAARCGLGMGYLLHSVVLPALAVLGASRPGSA. Over 40 to 380 the chain is Extracellular; it reads AQDDDFFHEL…APDSDDVALY (341 aa). The 98-residue stretch at 62–159 folds into the Ig-like domain; the sequence is PHFLIEPEEA…AGTTKSRKAY (98 aa). 9 cysteine pairs are disulfide-bonded: Cys83/Cys144, Cys95/Cys142, Cys188/Cys239, Cys272/Cys309, Cys276/Cys313, Cys287/Cys299, Cys328/Cys362, Cys332/Cys367, and Cys340/Cys352. The 96-residue stretch at 161–256 folds into the Ig-like C2-type domain; it reads RIAYLRKTFE…KRKSTTATVI (96 aa). Asn236 is a glycosylation site (N-linked (GlcNAc...) asparagine). TSP type-1 domains lie at 260 to 314 and 316 to 368; these read NGGW…TLCP and DGKW…GLCM. Asn361 is a glycosylation site (N-linked (GlcNAc...) asparagine). Residues 381-401 form a helical membrane-spanning segment; it reads VGIVIAVIVCLAISVVVALFV. Over 402 to 931 the chain is Cytoplasmic; sequence YRKNHRDFES…VVSLAAEGNY (530 aa). In terms of domain architecture, ZU5 spans 530–664; sequence CTAFGTFNSL…EACHILTETL (135 aa). Residues 850 to 929 enclose the Death domain; that stretch reads QKLCSSLDAP…ETVVSLAAEG (80 aa).

The protein belongs to the unc-5 family. As to expression, restricted to proprioceptive neurons.

The protein localises to the cell membrane. It is found in the cell surface. Its subcellular location is the synapse. The protein resides in the synaptosome. It localises to the cell projection. The protein localises to the axon. It is found in the dendrite. Its subcellular location is the growth cone. The protein resides in the lamellipodium. It localises to the filopodium. Functionally, receptor for netrin required for axon guidance. Mediates axon repulsion of neuronal growth cones in the developing nervous system upon ligand binding. Involved in dorsal root ganglion axon projection towards the spinal cord. The chain is Netrin receptor UNC5C (UNC5C) from Gallus gallus (Chicken).